A 488-amino-acid polypeptide reads, in one-letter code: Replication-associated protein (488 aa).

The disordered stretch occupies residues 462–488 (PRPRQMQRSATEHNLFQYARSGRDPTS).

It is found in the host nucleus. Its function is as follows. Plays an essential for the replication of viral DNA. Presumably cleaves viral genomic dsRNA replicative form to initiate rolling circle replication. This Chaetoceros diatodnavirus 1 (Chaetoceros setoense DNA virus) protein is Replication-associated protein.